The chain runs to 535 residues: GMP synthase [glutamine-hydrolyzing] (535 aa).

Residues 24 to 217 form the Glutamine amidotransferase type-1 domain; the sequence is KILIVDFGSQ…VRKVAGLKGD (194 aa). Cysteine 101 serves as the catalytic Nucleophile. Active-site residues include histidine 191 and glutamate 193. The GMPS ATP-PPase domain maps to 218–410; sequence WTMRAFREEA…LGLPEVFVGR (193 aa). 245–251 contacts ATP; that stretch reads SGGVDSA.

As to quaternary structure, homodimer.

The enzyme catalyses XMP + L-glutamine + ATP + H2O = GMP + L-glutamate + AMP + diphosphate + 2 H(+). It participates in purine metabolism; GMP biosynthesis; GMP from XMP (L-Gln route): step 1/1. Catalyzes the synthesis of GMP from XMP. This is GMP synthase [glutamine-hydrolyzing] from Rhodopseudomonas palustris (strain BisB18).